Reading from the N-terminus, the 299-residue chain is 4-diphosphocytidyl-2-C-methyl-D-erythritol kinase (299 aa).

Residue Lys11 is part of the active site. 94-104 (PQGGGLGGGSS) serves as a coordination point for ATP. Asp136 is an active-site residue.

Belongs to the GHMP kinase family. IspE subfamily.

It carries out the reaction 4-CDP-2-C-methyl-D-erythritol + ATP = 4-CDP-2-C-methyl-D-erythritol 2-phosphate + ADP + H(+). Its pathway is isoprenoid biosynthesis; isopentenyl diphosphate biosynthesis via DXP pathway; isopentenyl diphosphate from 1-deoxy-D-xylulose 5-phosphate: step 3/6. Catalyzes the phosphorylation of the position 2 hydroxy group of 4-diphosphocytidyl-2C-methyl-D-erythritol. The chain is 4-diphosphocytidyl-2-C-methyl-D-erythritol kinase from Bordetella bronchiseptica (strain ATCC BAA-588 / NCTC 13252 / RB50) (Alcaligenes bronchisepticus).